The primary structure comprises 518 residues: Forkhead box protein H1 (518 aa).

The tract at residues 72-113 is disordered; the sequence is GSMYGLSPGTHEGSCTHTHEGPKDSMAGDQTRSRKSKKKNYH. Basic residues predominate over residues 104–113; sequence SRKSKKKNYH. Positions 117 to 213 form a DNA-binding region, fork-head; sequence KPPYSYLAMI…MKLQNTALTR (97 aa). The tract at residues 318–397 is disordered; the sequence is KPTRNARSPG…NYSPIEPPKK (80 aa). Positions 329-346 are enriched in low complexity; sequence STIHSTYSSSSSSISTIS. The tract at residues 380-506 is SMAD-interaction domain (SID); sequence TSSDPDTGNY…PSFLSQCLGS (127 aa). Positions 405–409 match the Fast/FoxH1 motif 1 (FM1) motif; sequence LPTSY. The short motif at 415 to 421 is the Fast/FoxH1 motif 2 (FM2) element; the sequence is PNVVAPP. The SMAD interaction motif (SIM) signature appears at 470–491; the sequence is LDNMLRAMPPNKSVFDVLTSHP.

In terms of assembly, ARF1 contains 2 smad2s, 1 smad4 and 1 foxh1/fast-1 protein. Interaction with smad4 is most likely indirect through interaction with the MH2 domain of smad2. Binds to the MH2 domain of smad3, which can incorporate into the ARF1 complex. The ARF1 and ARF2 complexes are activated by distinct TGF-beta family members; formation of ARF1 is promoted by activin. Interacts (via Fork-head domain) with gtf2ird1/wbscr11 (via repeats 4-5). Highly expressed in the animal cap (prospective ectoderm) and prospective mesoderm of stage 10.25 embryos.

The protein localises to the nucleus. Its function is as follows. Transcriptional activator. Recognizes and binds to the DNA sequence 5'-TGT[GT][GT]ATT-3'. Upon TGF-beta induction, forms a transcriptionally active complex with smad2 and smad4 called activin-responsive factor 1 (ARF1), which binds a site on the mix-B/mix.2 promoter called the activin response element (ARE). Binds to activated smads and the ARE with much lower affinity than fast3. Necessary for the first steps in mesoderm specification, directly inducing mesodermal genes. Acts with fast3 to control the convergent extension movements of gastrulation. Binds to the proximal element (PE) of the gsc gene and cooperates with gtf2ird1/wbscr11 and SMAD proteins to regulate gsc transcription. The sequence is that of Forkhead box protein H1 (foxh1) from Xenopus laevis (African clawed frog).